The sequence spans 175 residues: NADH-ubiquinone oxidoreductase chain 6 (175 aa).

The next 5 helical transmembrane spans lie at 1–21 (MMTY…VGFS), 25–45 (SPIY…GIVM), 47–67 (FGGS…MLVV), 88–108 (VVMG…LCVL), and 149–169 (YGVW…IVVL).

The protein belongs to the complex I subunit 6 family.

It is found in the mitochondrion membrane. It carries out the reaction a ubiquinone + NADH + 5 H(+)(in) = a ubiquinol + NAD(+) + 4 H(+)(out). Core subunit of the mitochondrial membrane respiratory chain NADH dehydrogenase (Complex I) that is believed to belong to the minimal assembly required for catalysis. Complex I functions in the transfer of electrons from NADH to the respiratory chain. The immediate electron acceptor for the enzyme is believed to be ubiquinone. The protein is NADH-ubiquinone oxidoreductase chain 6 (MT-ND6) of Rhinolophus monoceros (Formosan lesser horseshoe bat).